A 1628-amino-acid polypeptide reads, in one-letter code: THO complex subunit 2 (1628 aa).

Basic and acidic residues-rich tracts occupy residues 1 to 10 (MTSLPEKDQQ) and 1360 to 1399 (TDNKNLVENKAVEKRVEARSSANERKQEERRRKTTPEGNR). Disordered regions lie at residues 1 to 21 (MTSLPEKDQQGEVSVSENQKK) and 1337 to 1628 (VALN…RKIQ). Phosphothreonine is present on residues T1406 and T1408. The segment covering 1411-1429 (DIQRSDSKLREDQSRDRTP) has biased composition (basic and acidic residues). Residues 1430-1444 (QSRSFTNENNDNLRS) show a composition bias toward polar residues. The segment covering 1461 to 1474 (ARREHESQKSDRWR) has biased composition (basic and acidic residues). Residues 1476-1493 (NGNVNRNPRVSNNNSTNV) show a composition bias toward low complexity. Residues 1494 to 1526 (SRERSSEANHRTSNDNKRDEVTEGKDKNKRQDI) are compositionally biased toward basic and acidic residues. The span at 1527-1550 (SGESNSRQNNAISRAGRSNGSNRG) shows a compositional bias: polar residues. Positions 1551–1560 (NDSRDADGRR) are enriched in basic and acidic residues. S1577 carries the post-translational modification Phosphoserine. Over residues 1581–1628 (LREEDERENSRRRARQDDRRDRDSRQQRDRPRDRTSRSAREEKRRKIQ) the composition is skewed to basic and acidic residues.

It belongs to the THOC2 family. Component of the THO complex. THO associates with DNA and RNA in vitro.

It is found in the nucleus. Component the THO subcomplex of the TREX complex, which operates in coupling transcription elongation to mRNA export. The THO complex is recruited to transcribed genes and moves along the gene with the elongating polymerase during transcription. THO is important for stabilizing nascent RNA in the RNA polymerase II elongation complex by preventing formation of DNA:RNA hybrids behind the elongating polymerase. The chain is THO complex subunit 2 (tho2) from Schizosaccharomyces pombe (strain 972 / ATCC 24843) (Fission yeast).